The primary structure comprises 620 residues: Mitochondrial Rho GTPase 2 (620 aa).

Over M1–R594 the chain is Cytoplasmic. Residues K2 to H168 enclose the Miro 1 domain. GTP contacts are provided by G16, K17, T18, and S19. T18 is a Mg(2+) binding site. P35 and D57 together coordinate Mg(2+). Residue S59 participates in GTP binding. A Glycyl lysine isopeptide (Lys-Gly) (interchain with G-Cter in ubiquitin) cross-link involves residue K96. N118, K119, D121, A149, and K150 together coordinate GTP. K119 is covalently cross-linked (Glycyl lysine isopeptide (Lys-Gly) (interchain with G-Cter in ubiquitin)). Residue K164 forms a Glycyl lysine isopeptide (Lys-Gly) (interchain with G-Cter in ubiquitin) linkage. EF-hand domains are found at residues A184–H219 and H304–P339. 8 residues coordinate Ca(2+): D197, D199, D201, E208, D317, D319, D321, and E328. The disordered stretch occupies residues P340 to P364. One can recognise a Miro 2 domain in the interval R415–F578. GTP contacts are provided by G427, G429, K430, and S431. Mg(2+) contacts are provided by S431 and E473. Positions 527, 529, and 558 each coordinate GTP. Residues V595 to V617 traverse the membrane as a helical; Anchor for type IV membrane protein segment. The Mitochondrial intermembrane portion of the chain corresponds to K618–R620.

It belongs to the mitochondrial Rho GTPase family. Homodimer. Interacts with the kinesin-binding proteins TRAK1/OIP106 and TRAK2/GRIF1, forming a link between mitochondria and the trafficking apparatus of the microtubules. Interacts with ARMCX3. Found in a complex with KIF5B, OGT, RHOT1 and TRAK1. Ubiquitinated by PRKN in a PINK1-dependent manner, leading to its degradation.

It localises to the mitochondrion outer membrane. The catalysed reaction is GTP + H2O = GDP + phosphate + H(+). It carries out the reaction ATP + H2O = ADP + phosphate + H(+). The enzyme catalyses UTP + H2O = UDP + phosphate + H(+). Functionally, atypical mitochondrial nucleoside-triphosphatase (NTPase) involved in mitochondrial trafficking. Probably involved in control of anterograde transport of mitochondria and their subcellular distribution. Can hydrolyze GTP, ATP and UTP. The chain is Mitochondrial Rho GTPase 2 (RHOT2) from Sus scrofa (Pig).